Consider the following 822-residue polypeptide: uncharacterized protein (822 aa).

The Cytoplasmic portion of the chain corresponds to 1–13 (MCHNSVRSGNKAG). A helical transmembrane segment spans residues 14 to 34 (FLGIKFGSALLSIATGAIAIA). Residues 35–44 (LLCKFHDHEA) lie on the Extracellular side of the membrane. A helical transmembrane segment spans residues 45–65 (VLIVIVCSTLLYGIPSLISFI). Residues 66-76 (TETVFAPSKFH) lie on the Cytoplasmic side of the membrane. The chain crosses the membrane as a helical span at residues 77–97 (IGYFYNVLNFALPLITMGCTV). The Extracellular segment spans residues 98–120 (DYFHNTLRSPISVQSESHRVYIT). Residues 121 to 141 (TLDSLLIFTLFINGIQLGFFL) traverse the membrane as a helical segment. The Cytoplasmic segment spans residues 142–822 (KDGNANNFGS…PVEELVSPSK (681 aa)). The segment at 271–290 (RNTQQATKVPTEKKSNHRSS) is disordered. Residue S690 is modified to Phosphoserine. The span at 698–712 (TLQSSHSPTKSTSGN) shows a compositional bias: polar residues. Disordered stretches follow at residues 698–728 (TLQS…STVN) and 751–783 (NGEE…GYPE). Over residues 761-776 (QSIQSSSSGSEQESAG) the composition is skewed to low complexity.

It is found in the membrane. This is an uncharacterized protein from Saccharomyces cerevisiae (strain ATCC 204508 / S288c) (Baker's yeast).